The following is a 1478-amino-acid chain: FYVE and coiled-coil domain-containing protein 1 (1478 aa).

At alanine 2 the chain carries N-acetylalanine. Positions threonine 4 to glutamate 33 form a coiled coil. One can recognise an RUN domain in the interval threonine 36–phenylalanine 169. A Phosphoserine modification is found at serine 196. Residues asparagine 225–arginine 280 adopt a coiled-coil conformation. Serine 342 is subject to Phosphoserine. Threonine 381 is modified (phosphothreonine). Coiled coils occupy residues serine 394–arginine 555 and glutamine 596–leucine 1151. The disordered stretch occupies residues glycine 586–glutamate 613. At serine 878 the chain carries Phosphoserine. An FYVE-type zinc finger spans residues aspartate 1173 to serine 1231. Residues cysteine 1179, cysteine 1182, cysteine 1195, cysteine 1198, cysteine 1203, cysteine 1206, cysteine 1223, and cysteine 1226 each coordinate Zn(2+). Residues serine 1231–glutamine 1261 show a composition bias toward low complexity. Disordered stretches follow at residues serine 1231–aspartate 1277 and serine 1294–valine 1332. Composition is skewed to polar residues over residues serine 1294–threonine 1305 and glutamate 1314–proline 1324. Residues glutamate 1337–valine 1466 form the GOLD domain.

Can form homodimers. Interacts (via C-terminus) with MAP1LC3B. Interacts with RAB7A; the interaction with RAB7A induces FYCO1 recruitment to late endosomal/lysosomal compartments. Interacts with MAP1LC3B. In terms of tissue distribution, expressed in heart and skeletal muscle.

The protein localises to the cytoplasmic vesicle. It is found in the autophagosome. The protein resides in the endosome. It localises to the lysosome. In terms of biological role, may mediate microtubule plus end-directed vesicle transport. In Homo sapiens (Human), this protein is FYVE and coiled-coil domain-containing protein 1 (FYCO1).